Consider the following 874-residue polypeptide: Protein translocase subunit SecA (874 aa).

ATP-binding positions include Gln-85, Gly-103–Thr-107, and Asp-492. Positions Glu-839–Arg-854 are enriched in basic and acidic residues. The interval Glu-839 to Lys-864 is disordered. Cys-858, Cys-860, Cys-869, and Cys-870 together coordinate Zn(2+).

Belongs to the SecA family. Monomer and homodimer. Part of the essential Sec protein translocation apparatus which comprises SecA, SecYEG and auxiliary proteins SecDF. Other proteins may also be involved. It depends on Zn(2+) as a cofactor.

The protein resides in the cell membrane. Its subcellular location is the cytoplasm. The catalysed reaction is ATP + H2O + cellular proteinSide 1 = ADP + phosphate + cellular proteinSide 2.. Functionally, part of the Sec protein translocase complex. Interacts with the SecYEG preprotein conducting channel. Has a central role in coupling the hydrolysis of ATP to the transfer of proteins into and across the cell membrane, serving as an ATP-driven molecular motor driving the stepwise translocation of polypeptide chains across the membrane. This Carboxydothermus hydrogenoformans (strain ATCC BAA-161 / DSM 6008 / Z-2901) protein is Protein translocase subunit SecA.